Here is a 204-residue protein sequence, read N- to C-terminus: Guanylate kinase (204 aa).

The Guanylate kinase-like domain maps to 4 to 182; sequence GMLVVVSGPS…AVNDLEAVLT (179 aa). 11–18 provides a ligand contact to ATP; that stretch reads GPSGAGKG.

This sequence belongs to the guanylate kinase family.

Its subcellular location is the cytoplasm. The enzyme catalyses GMP + ATP = GDP + ADP. In terms of biological role, essential for recycling GMP and indirectly, cGMP. The sequence is that of Guanylate kinase from Carboxydothermus hydrogenoformans (strain ATCC BAA-161 / DSM 6008 / Z-2901).